The primary structure comprises 196 residues: ATP synthase subunit b 2 (196 aa).

Residues 1–18 (MVVAQAGAPAHPPAAHGA) are compositionally biased toward low complexity. The segment at 1–33 (MVVAQAGAPAHPPAAHGAEAGHGEAAGGEHGGF) is disordered. The helical transmembrane segment at 41 to 60 (FASQLIWLIVSFGALYFLMS) threads the bilayer.

The protein belongs to the ATPase B chain family. As to quaternary structure, F-type ATPases have 2 components, F(1) - the catalytic core - and F(0) - the membrane proton channel. F(1) has five subunits: alpha(3), beta(3), gamma(1), delta(1), epsilon(1). F(0) has three main subunits: a(1), b(2) and c(10-14). The alpha and beta chains form an alternating ring which encloses part of the gamma chain. F(1) is attached to F(0) by a central stalk formed by the gamma and epsilon chains, while a peripheral stalk is formed by the delta and b chains.

Its subcellular location is the cell inner membrane. F(1)F(0) ATP synthase produces ATP from ADP in the presence of a proton or sodium gradient. F-type ATPases consist of two structural domains, F(1) containing the extramembraneous catalytic core and F(0) containing the membrane proton channel, linked together by a central stalk and a peripheral stalk. During catalysis, ATP synthesis in the catalytic domain of F(1) is coupled via a rotary mechanism of the central stalk subunits to proton translocation. Functionally, component of the F(0) channel, it forms part of the peripheral stalk, linking F(1) to F(0). The b'-subunit is a diverged and duplicated form of b found in plants and photosynthetic bacteria. This chain is ATP synthase subunit b 2 (atpF2), found in Azorhizobium caulinodans (strain ATCC 43989 / DSM 5975 / JCM 20966 / LMG 6465 / NBRC 14845 / NCIMB 13405 / ORS 571).